The following is a 271-amino-acid chain: Mannosyl-3-phosphoglycerate phosphatase (271 aa).

The Nucleophile role is filled by aspartate 13. The Mg(2+) site is built by aspartate 13, aspartate 15, and aspartate 214.

The protein belongs to the HAD-like hydrolase superfamily. MPGP family. The cofactor is Mg(2+).

The protein localises to the cytoplasm. The catalysed reaction is 2-O-(alpha-D-mannosyl)-3-phosphoglycerate + H2O = (2R)-2-O-(alpha-D-mannosyl)-glycerate + phosphate. This chain is Mannosyl-3-phosphoglycerate phosphatase, found in Escherichia coli (strain K12 / DH10B).